The primary structure comprises 356 residues: UDP-N-acetylglucosamine--N-acetylmuramyl-(pentapeptide) pyrophosphoryl-undecaprenol N-acetylglucosamine transferase (356 aa).

Residues 15 to 17, Asn-127, Arg-163, Ser-191, Ile-244, 263 to 268, and Gln-288 each bind UDP-N-acetyl-alpha-D-glucosamine; these read TGG and ALTVSE.

This sequence belongs to the glycosyltransferase 28 family. MurG subfamily.

Its subcellular location is the cell inner membrane. The enzyme catalyses di-trans,octa-cis-undecaprenyl diphospho-N-acetyl-alpha-D-muramoyl-L-alanyl-D-glutamyl-meso-2,6-diaminopimeloyl-D-alanyl-D-alanine + UDP-N-acetyl-alpha-D-glucosamine = di-trans,octa-cis-undecaprenyl diphospho-[N-acetyl-alpha-D-glucosaminyl-(1-&gt;4)]-N-acetyl-alpha-D-muramoyl-L-alanyl-D-glutamyl-meso-2,6-diaminopimeloyl-D-alanyl-D-alanine + UDP + H(+). It functions in the pathway cell wall biogenesis; peptidoglycan biosynthesis. Cell wall formation. Catalyzes the transfer of a GlcNAc subunit on undecaprenyl-pyrophosphoryl-MurNAc-pentapeptide (lipid intermediate I) to form undecaprenyl-pyrophosphoryl-MurNAc-(pentapeptide)GlcNAc (lipid intermediate II). In Yersinia pestis (strain Pestoides F), this protein is UDP-N-acetylglucosamine--N-acetylmuramyl-(pentapeptide) pyrophosphoryl-undecaprenol N-acetylglucosamine transferase.